We begin with the raw amino-acid sequence, 471 residues long: 3-isopropylmalate dehydratase large subunit (471 aa).

The [4Fe-4S] cluster site is built by C349, C410, and C413.

Belongs to the aconitase/IPM isomerase family. LeuC type 1 subfamily. In terms of assembly, heterodimer of LeuC and LeuD. It depends on [4Fe-4S] cluster as a cofactor.

The catalysed reaction is (2R,3S)-3-isopropylmalate = (2S)-2-isopropylmalate. Its pathway is amino-acid biosynthesis; L-leucine biosynthesis; L-leucine from 3-methyl-2-oxobutanoate: step 2/4. Functionally, catalyzes the isomerization between 2-isopropylmalate and 3-isopropylmalate, via the formation of 2-isopropylmaleate. The polypeptide is 3-isopropylmalate dehydratase large subunit (Chromobacterium violaceum (strain ATCC 12472 / DSM 30191 / JCM 1249 / CCUG 213 / NBRC 12614 / NCIMB 9131 / NCTC 9757 / MK)).